Here is a 559-residue protein sequence, read N- to C-terminus: DDB1- and CUL4-associated factor 10 (559 aa).

The segment at 1–119 (MFPFGPHSPG…HGLGAGLGGP (119 aa)) is disordered. Phosphoserine is present on residues Ser-53, Ser-63, Ser-89, and Ser-92. The span at 56 to 86 (RPGAPSLSPAPRSGELGLPGAPESSTASAPG) shows a compositional bias: low complexity. The segment covering 87–97 (EPSPPSPPCRR) has biased composition (pro residues). Arg-134 is subject to Omega-N-methylarginine. WD repeat units lie at residues 166 to 205 (RTHGAVFNLEYSPDGSVLTVACEQTEVLLFDPISSKHIKT), 209 to 247 (AHEDCVNNIRFLDNRLFATCSDDTTIALWDLRKLNTKVC), 251 to 290 (GHTSWVKNIEYDTNTRLLVTSGFDGNVIIWDTNRYTEDGC), and 296 to 335 (FHTRFLMRMRLTPDCSKMLISTSSGYLLILHDLDLTKSLE). Phosphoserine is present on Ser-349. Low complexity predominate over residues 350 to 367 (SSDLTTSSSSSGPRVSGS). The disordered stretch occupies residues 350–396 (SSDLTTSSSSSGPRVSGSPCHHSDSNSSEKHMSRASQREGVSPRNSL). Basic and acidic residues predominate over residues 370-381 (HHSDSNSSEKHM). WD repeat units follow at residues 408–448 (DHGN…QEGA), 470–508 (VGRGYIKELCFSPDGRMISSPHGYGIRLLGFDKQCSELV), and 526–559 (SHNDVVLTTKFSPTHCQIASGCLSGRVSLYQPKF).

This sequence belongs to the WD repeat DCAF10 family. As to quaternary structure, interacts with DDB1.

The protein operates within protein modification; protein ubiquitination. May function as a substrate receptor for CUL4-DDB1 E3 ubiquitin-protein ligase complex. The protein is DDB1- and CUL4-associated factor 10 (DCAF10) of Homo sapiens (Human).